The primary structure comprises 376 residues: Chaperone protein DnaJ (376 aa).

A J domain is found at aspartate 5–glycine 70. The CR-type zinc-finger motif lies at glycine 137–glutamate 215. Cysteine 150, cysteine 153, cysteine 167, cysteine 170, cysteine 189, cysteine 192, cysteine 203, and cysteine 206 together coordinate Zn(2+). 4 CXXCXGXG motif repeats span residues cysteine 150–glycine 157, cysteine 167–glycine 174, cysteine 189–glycine 196, and cysteine 203–glycine 210.

It belongs to the DnaJ family. As to quaternary structure, homodimer. It depends on Zn(2+) as a cofactor.

It localises to the cytoplasm. Participates actively in the response to hyperosmotic and heat shock by preventing the aggregation of stress-denatured proteins and by disaggregating proteins, also in an autonomous, DnaK-independent fashion. Unfolded proteins bind initially to DnaJ; upon interaction with the DnaJ-bound protein, DnaK hydrolyzes its bound ATP, resulting in the formation of a stable complex. GrpE releases ADP from DnaK; ATP binding to DnaK triggers the release of the substrate protein, thus completing the reaction cycle. Several rounds of ATP-dependent interactions between DnaJ, DnaK and GrpE are required for fully efficient folding. Also involved, together with DnaK and GrpE, in the DNA replication of plasmids through activation of initiation proteins. This chain is Chaperone protein DnaJ, found in Rhizobium leguminosarum bv. trifolii (strain WSM2304).